The chain runs to 239 residues: Phosphoribosylaminoimidazole-succinocarboxamide synthase (239 aa).

This sequence belongs to the SAICAR synthetase family.

It catalyses the reaction 5-amino-1-(5-phospho-D-ribosyl)imidazole-4-carboxylate + L-aspartate + ATP = (2S)-2-[5-amino-1-(5-phospho-beta-D-ribosyl)imidazole-4-carboxamido]succinate + ADP + phosphate + 2 H(+). It participates in purine metabolism; IMP biosynthesis via de novo pathway; 5-amino-1-(5-phospho-D-ribosyl)imidazole-4-carboxamide from 5-amino-1-(5-phospho-D-ribosyl)imidazole-4-carboxylate: step 1/2. The polypeptide is Phosphoribosylaminoimidazole-succinocarboxamide synthase (Bacillus cereus (strain G9842)).